The primary structure comprises 483 residues: Protein nucleotidyltransferase YdiU (483 aa).

Residues glycine 81, glycine 83, arginine 84, lysine 103, aspartate 115, glycine 116, arginine 166, and arginine 173 each coordinate ATP. Aspartate 244 (proton acceptor) is an active-site residue. Mg(2+) contacts are provided by asparagine 245 and aspartate 254. ATP is bound at residue aspartate 254.

It belongs to the SELO family. Mg(2+) serves as cofactor. It depends on Mn(2+) as a cofactor.

The catalysed reaction is L-seryl-[protein] + ATP = 3-O-(5'-adenylyl)-L-seryl-[protein] + diphosphate. The enzyme catalyses L-threonyl-[protein] + ATP = 3-O-(5'-adenylyl)-L-threonyl-[protein] + diphosphate. It catalyses the reaction L-tyrosyl-[protein] + ATP = O-(5'-adenylyl)-L-tyrosyl-[protein] + diphosphate. It carries out the reaction L-histidyl-[protein] + UTP = N(tele)-(5'-uridylyl)-L-histidyl-[protein] + diphosphate. The catalysed reaction is L-seryl-[protein] + UTP = O-(5'-uridylyl)-L-seryl-[protein] + diphosphate. The enzyme catalyses L-tyrosyl-[protein] + UTP = O-(5'-uridylyl)-L-tyrosyl-[protein] + diphosphate. Functionally, nucleotidyltransferase involved in the post-translational modification of proteins. It can catalyze the addition of adenosine monophosphate (AMP) or uridine monophosphate (UMP) to a protein, resulting in modifications known as AMPylation and UMPylation. This is Protein nucleotidyltransferase YdiU from Shewanella halifaxensis (strain HAW-EB4).